A 728-amino-acid polypeptide reads, in one-letter code: Methionine--tRNA ligase (728 aa).

The short motif at 13-23 (PYANGSIHLGH) is the 'HIGH' region element. Zn(2+) contacts are provided by cysteine 144, cysteine 147, cysteine 157, and cysteine 160. A 'KMSKS' region motif is present at residues 348–352 (KMSKS). Residue lysine 351 coordinates ATP. Residues 585–620 (LAPAKSQQVAQAVETMEKNSSTTPAPAKEGEAGQAS) are disordered. Positions 628–728 (DFGKIDLRVA…EGARPGMKVK (101 aa)) constitute a tRNA-binding domain.

Belongs to the class-I aminoacyl-tRNA synthetase family. MetG type 1 subfamily. In terms of assembly, homodimer. Zn(2+) serves as cofactor.

The protein localises to the cytoplasm. It catalyses the reaction tRNA(Met) + L-methionine + ATP = L-methionyl-tRNA(Met) + AMP + diphosphate. Its function is as follows. Is required not only for elongation of protein synthesis but also for the initiation of all mRNA translation through initiator tRNA(fMet) aminoacylation. In Nitrosospira multiformis (strain ATCC 25196 / NCIMB 11849 / C 71), this protein is Methionine--tRNA ligase.